The following is a 48-amino-acid chain: Delta-stichotoxin-She1a (48 aa).

Cystine bridges form between C3–C43, C5–C33, and C26–C44.

Belongs to the sea anemone sodium channel inhibitory toxin family. Type II subfamily.

The protein localises to the secreted. It is found in the nematocyst. In terms of biological role, binds specifically to voltage-gated sodium channels (Nav), thereby delaying their inactivation during signal transduction. Is highly toxic to crabs (by intrahemocoelic injection), but without effect upon mice (by intraperitoneal injection). This is Delta-stichotoxin-She1a from Stichodactyla helianthus (Sun anemone).